A 135-amino-acid chain; its full sequence is Transcription antitermination protein NusB (135 aa).

The interval 115 to 135 (ATPAESTGRGSAVDSIPGQPS) is disordered.

It belongs to the NusB family.

Involved in transcription antitermination. Required for transcription of ribosomal RNA (rRNA) genes. Binds specifically to the boxA antiterminator sequence of the ribosomal RNA (rrn) operons. This Frankia casuarinae (strain DSM 45818 / CECT 9043 / HFP020203 / CcI3) protein is Transcription antitermination protein NusB.